Reading from the N-terminus, the 156-residue chain is Small ribosomal subunit protein uS7 (156 aa).

The protein belongs to the universal ribosomal protein uS7 family. As to quaternary structure, part of the 30S ribosomal subunit. Contacts proteins S9 and S11.

One of the primary rRNA binding proteins, it binds directly to 16S rRNA where it nucleates assembly of the head domain of the 30S subunit. Is located at the subunit interface close to the decoding center, probably blocks exit of the E-site tRNA. The sequence is that of Small ribosomal subunit protein uS7 from Onion yellows phytoplasma (strain OY-M).